We begin with the raw amino-acid sequence, 189 residues long: Apolipoprotein D (189 aa).

A signal peptide spans 1-20; the sequence is MVMLLLLLSALAGLFGAAEG. Pyrrolidone carboxylic acid is present on Gln21. 2 disulfides stabilise this stretch: Cys28/Cys134 and Cys61/Cys185. N-linked (GlcNAc...) (complex) asparagine glycosylation is found at Asn65 and Asn98.

It belongs to the calycin superfamily. Lipocalin family. Homodimer. In plasma, also exists as a disulfide-linked heterodimer with APOA2. In terms of processing, N-glycosylated. N-glycan heterogeneity at Asn-65: Hex5HexNAc4 (major) and Hex6HexNAc5 (minor); at Asn-98: Hex5HexNAc4 (minor), dHex1Hex5HexNAc4 (major), dHex1Hex6HexNAc5 (minor) and dHex1Hex7HexNAc6 (minor). Expressed in liver, intestine, pancreas, kidney, placenta, adrenal, spleen, fetal brain tissue and tears.

The protein resides in the secreted. In terms of biological role, APOD occurs in the macromolecular complex with lecithin-cholesterol acyltransferase. It is probably involved in the transport and binding of bilin. Appears to be able to transport a variety of ligands in a number of different contexts. This is Apolipoprotein D (APOD) from Homo sapiens (Human).